A 627-amino-acid polypeptide reads, in one-letter code: Anti-CBASS protein Acb1 (627 aa).

A 3',3'-cGAMP-binding site is contributed by tyrosine 105. Tyrosine 105 is a 3',3'-cUAMP binding site. The segment at 437–474 (LADQPETESANENTEQPESGEEGEEGQPTRRAANDAKP) is disordered. Active-site residues include histidine 508, threonine 510, histidine 584, and threonine 586. 2 residues coordinate 3',3'-cGAMP: glutamate 614 and tryptophan 620. 3',3'-cUAMP-binding residues include glutamate 614 and tryptophan 620.

It belongs to the anti-CBASS protein Acb1 family.

The catalysed reaction is 3',3'-cUAMP + H2O = U[3'-5']pAp[3'] + H(+). It carries out the reaction 3',3',3'-c-tri-AMP + H2O = A[3'-5']pA[3'-5']pAp[3'] + H(+). The enzyme catalyses 3',3',3'-cAAG + H2O = G[3'-5']pA[3'-5']pAp[3'] + H(+). It catalyses the reaction 3',3',3'-cAAG + H2O = A[3'-5']pG[3'-5']pAp[3'] + H(+). The catalysed reaction is 3',3'-cGAMP + H2O = G[3'-5']pAp[3'] + H(+). Counteracts or regulates the endogenous CBASS antiviral defense system. Phosphodiesterase that enables metal-independent hydrolysis of the host cyclic di- and trinucleotide CBASS signals such as 3'3'-cGAMP, 3'3'cUA, and 3'3'3'-cAAA. This Caulobacter sp. (strain RHG1) protein is Anti-CBASS protein Acb1.